We begin with the raw amino-acid sequence, 116 residues long: Putative iron-sulfur cluster insertion protein ErpA (116 aa).

Iron-sulfur cluster is bound by residues C44, C108, and C110.

It belongs to the HesB/IscA family. As to quaternary structure, homodimer. The cofactor is iron-sulfur cluster.

Functionally, required for insertion of 4Fe-4S clusters. The polypeptide is Putative iron-sulfur cluster insertion protein ErpA (Thiobacillus denitrificans (strain ATCC 25259 / T1)).